Consider the following 341-residue polypeptide: tRNA N6-adenosine threonylcarbamoyltransferase (341 aa).

The Fe cation site is built by H111 and H115. Residues 133 to 137 (AVSGG), D166, G179, D183, and N273 each bind substrate. D301 serves as a coordination point for Fe cation.

The protein belongs to the KAE1 / TsaD family. Requires Fe(2+) as cofactor.

Its subcellular location is the cytoplasm. It catalyses the reaction L-threonylcarbamoyladenylate + adenosine(37) in tRNA = N(6)-L-threonylcarbamoyladenosine(37) in tRNA + AMP + H(+). Its function is as follows. Required for the formation of a threonylcarbamoyl group on adenosine at position 37 (t(6)A37) in tRNAs that read codons beginning with adenine. Is involved in the transfer of the threonylcarbamoyl moiety of threonylcarbamoyl-AMP (TC-AMP) to the N6 group of A37, together with TsaE and TsaB. TsaD likely plays a direct catalytic role in this reaction. This Geobacter metallireducens (strain ATCC 53774 / DSM 7210 / GS-15) protein is tRNA N6-adenosine threonylcarbamoyltransferase.